A 160-amino-acid polypeptide reads, in one-letter code: Cytochrome b6-f complex subunit 4 (160 aa).

The next 3 membrane-spanning stretches (helical) occupy residues Leu-36–Val-56, Leu-95–Glu-115, and Ala-131–Ile-151.

The protein belongs to the cytochrome b family. PetD subfamily. In terms of assembly, the 4 large subunits of the cytochrome b6-f complex are cytochrome b6, subunit IV (17 kDa polypeptide, petD), cytochrome f and the Rieske protein, while the 4 small subunits are petG, petL, petM and petN. The complex functions as a dimer.

The protein localises to the plastid. It is found in the chloroplast thylakoid membrane. Component of the cytochrome b6-f complex, which mediates electron transfer between photosystem II (PSII) and photosystem I (PSI), cyclic electron flow around PSI, and state transitions. This chain is Cytochrome b6-f complex subunit 4, found in Bigelowiella natans (Pedinomonas minutissima).